Reading from the N-terminus, the 255-residue chain is 5-oxoprolinase subunit A (255 aa).

It belongs to the LamB/PxpA family. Forms a complex composed of PxpA, PxpB and PxpC.

It carries out the reaction 5-oxo-L-proline + ATP + 2 H2O = L-glutamate + ADP + phosphate + H(+). Its function is as follows. Catalyzes the cleavage of 5-oxoproline to form L-glutamate coupled to the hydrolysis of ATP to ADP and inorganic phosphate. The polypeptide is 5-oxoprolinase subunit A (Campylobacter jejuni subsp. jejuni serotype O:2 (strain ATCC 700819 / NCTC 11168)).